The following is a 595-amino-acid chain: MHRYRSHTCAALRKSDVGSTVRLSGWVHRVRDHGGVLFIDLRDHYGMTQVVADPDSPAFKTAETVRGEWVIRVDGAVKARTDDTVNKNMPTGEVELYAREIEVLSAAKELPLPVFGEPDYPEDVRLKYRFLDLRRETLHKNIVRRTEIIAAMRRRMGDIGFTEYTTPILTASSPEGARDFLVPSRIHPGNFYALPQAPQQYKQLLMVAGFDRYFQIAPCFRDEDPRADRLPGEFYQLDLEMSFVEQEDVWDAMEPMIRAIFSDFAGGKPVTDKFPRIPYDTAIRKYGSDKPDLRNPIEMQEVTEHFAGSGFKVFANMIASNPKVEIWAIPAKTGGSRAFCDRMNAWAQSQGQPGLGYIFWRKEGEKLEGAGPLAKNIGEERTDAIRTQLGLEDGDACFFVAGEPAKFYKFAGEARTRAGEELNLVDRDRYELCWIVDFPFYEWNEEEKRVDFAHNPFSMPQGGLTALSSDDLLSIKAFQYDMVCNGFEIASGSIRNQSPELMVKAFENVGLSQADVEERFGGLYRAFQYGAPPHGGMAFGIDRIVMLLVGAKNLREISLFPMNQQAQDLLMGAPSQATPAQLRELSIRPIPQKKD.

Position 175 (Glu175) interacts with L-aspartate. Residues 199–202 are aspartate; it reads QQYK. 2 residues coordinate L-aspartate: Arg221 and His454. Position 221-223 (221-223) interacts with ATP; sequence RDE. Glu488 is a binding site for ATP. Residue Arg495 participates in L-aspartate binding. Residue 540-543 coordinates ATP; sequence GIDR.

The protein belongs to the class-II aminoacyl-tRNA synthetase family. Type 1 subfamily. Homodimer.

The protein localises to the cytoplasm. The enzyme catalyses tRNA(Asx) + L-aspartate + ATP = L-aspartyl-tRNA(Asx) + AMP + diphosphate. Functionally, aspartyl-tRNA synthetase with relaxed tRNA specificity since it is able to aspartylate not only its cognate tRNA(Asp) but also tRNA(Asn). Reaction proceeds in two steps: L-aspartate is first activated by ATP to form Asp-AMP and then transferred to the acceptor end of tRNA(Asp/Asn). The sequence is that of Aspartate--tRNA(Asp/Asn) ligase from Rhizobium meliloti (strain 1021) (Ensifer meliloti).